Here is a 389-residue protein sequence, read N- to C-terminus: cAMP-dependent protein kinase regulatory subunit (389 aa).

2 disordered regions span residues methionine 1 to glycine 57 and serine 87 to histidine 110. The tract at residues methionine 1 to phenylalanine 128 is dimerization and phosphorylation. Polar residues predominate over residues alanine 21–histidine 31. A compositionally biased stretch (basic and acidic residues) spans arginine 34–valine 43. Serine 87 is subject to Phosphoserine. The span at serine 87–tryptophan 105 shows a compositional bias: polar residues. 3',5'-cyclic AMP contacts are provided by residues leucine 129 to glutamate 258, glutamate 207, arginine 216, leucine 261 to glutamate 377, glutamate 327, and arginine 336.

This sequence belongs to the cAMP-dependent kinase regulatory chain family. Tetramer, composed of 2 regulatory (R) and 2 catalytic (C) subunits. In the presence of cAMP it dissociates into 2 active monomeric C subunits and an R dimer.

This chain is cAMP-dependent protein kinase regulatory subunit (pkar), found in Blumeria graminis (Powdery mildew).